Reading from the N-terminus, the 437-residue chain is Glutamyl-tRNA reductase (437 aa).

Substrate is bound by residues 46–49 (TCNR), Ser-111, 116–118 (ERE), and Gln-122. Cys-47 (nucleophile) is an active-site residue. 192 to 197 (GTGAYA) serves as a coordination point for NADP(+). The tract at residues 413–437 (PDVPEETAPSTRQDPSDTPRPRAVG) is disordered. Residues 426 to 437 (DPSDTPRPRAVG) are compositionally biased toward basic and acidic residues.

This sequence belongs to the glutamyl-tRNA reductase family. As to quaternary structure, homodimer.

The enzyme catalyses (S)-4-amino-5-oxopentanoate + tRNA(Glu) + NADP(+) = L-glutamyl-tRNA(Glu) + NADPH + H(+). It participates in porphyrin-containing compound metabolism; protoporphyrin-IX biosynthesis; 5-aminolevulinate from L-glutamyl-tRNA(Glu): step 1/2. Its function is as follows. Catalyzes the NADPH-dependent reduction of glutamyl-tRNA(Glu) to glutamate 1-semialdehyde (GSA). The sequence is that of Glutamyl-tRNA reductase from Kocuria rhizophila (strain ATCC 9341 / DSM 348 / NBRC 103217 / DC2201).